The primary structure comprises 463 residues: Asparagine--tRNA ligase (463 aa).

It belongs to the class-II aminoacyl-tRNA synthetase family. Homodimer.

It is found in the cytoplasm. The enzyme catalyses tRNA(Asn) + L-asparagine + ATP = L-asparaginyl-tRNA(Asn) + AMP + diphosphate + H(+). The chain is Asparagine--tRNA ligase from Bacillus thuringiensis subsp. konkukian (strain 97-27).